A 376-amino-acid chain; its full sequence is Phosphoglycerate kinase (376 aa).

(2R)-3-phosphoglycerate is bound by residues V1, D2, F3, N4, R17, S40, H41, G43, R44, L99, R100, H147, and R148. G191 provides a ligand contact to ADP. G191 provides a ligand contact to CDP. Residues A192 and K193 each contribute to the AMP site. A192 is a binding site for ATP. Residue A192 participates in Mg(2+) binding. D196 contributes to the CDP binding site. Position 196 (D196) interacts with Mg(2+). Residue K197 coordinates AMP. K197 is a binding site for ATP. G215 serves as a coordination point for ADP. G215 is a CDP binding site. Positions 216 and 290 each coordinate AMP. Residues G216 and G290 each coordinate ATP. Residues G315 and F320 each coordinate CDP. An ADP-binding site is contributed by F320. E321 provides a ligand contact to AMP. E321, D352, and T353 together coordinate ATP. Mg(2+) is bound at residue D352.

This sequence belongs to the phosphoglycerate kinase family. As to quaternary structure, monomer. Mg(2+) is required as a cofactor.

It catalyses the reaction (2R)-3-phosphoglycerate + ATP = (2R)-3-phospho-glyceroyl phosphate + ADP. It participates in carbohydrate degradation; glycolysis; pyruvate from D-glyceraldehyde 3-phosphate: step 2/5. In Glaucoma chattoni, this protein is Phosphoglycerate kinase (PGK).